The following is a 161-amino-acid chain: MSKEEKLAIAAATDGACSGNPGPGGWGALIRFQDGSEIEFGGNSPETTNNRMELQAALFILEKLKNIKFAPSLTIKTDSKYLIDGMDKWMPNWKKKGWKTASGKPVLNQDLWKALDHPELPKIKLQYVKGHSGEKDNDRVDAIAVAFSKGRKIQLKDFANN.

Residues 5-149 form the RNase H type-1 domain; that stretch reads EKLAIAAATD…VDAIAVAFSK (145 aa). The Mg(2+) site is built by aspartate 14, glutamate 53, aspartate 78, and aspartate 141.

This sequence belongs to the RNase H family. Monomer. Mg(2+) serves as cofactor.

The protein resides in the cytoplasm. It carries out the reaction Endonucleolytic cleavage to 5'-phosphomonoester.. Its function is as follows. Endonuclease that specifically degrades the RNA of RNA-DNA hybrids. The protein is Ribonuclease H of Prochlorococcus marinus (strain NATL2A).